The sequence spans 478 residues: tRNA (guanine(10)-N(2))-methyltransferase TRMT11 (478 aa).

Residues 457–478 (EERARSEMANAENVKSKGKEDV) are disordered.

It belongs to the class I-like SAM-binding methyltransferase superfamily. TRM11 methyltransferase family. Part of the heterodimeric TRMT11-TRM112 methyltransferase complex; this complex forms an active tRNA methyltransferase, where TRMT112 acts as an activator of the catalytic subunit TRMT11.

It is found in the cytoplasm. The catalysed reaction is guanosine(10) in tRNA + S-adenosyl-L-methionine = N(2)-methylguanosine(10) in tRNA + S-adenosyl-L-homocysteine + H(+). Functionally, catalytic subunit of the TRMT11-TRM112 methyltransferase complex, that specifically mediates the S-adenosyl-L-methionine-dependent N(2)-methylation of guanosine nucleotide at position 10 (m2G10) in tRNAs. This is one of the major tRNA (guanine-N(2))-methyltransferases. The protein is tRNA (guanine(10)-N(2))-methyltransferase TRMT11 (trmt11.L) of Xenopus laevis (African clawed frog).